The primary structure comprises 879 residues: Alanine--tRNA ligase 1 (879 aa).

4 residues coordinate Zn(2+): histidine 566, histidine 570, cysteine 668, and histidine 672.

This sequence belongs to the class-II aminoacyl-tRNA synthetase family. Requires Zn(2+) as cofactor.

The protein localises to the cytoplasm. It catalyses the reaction tRNA(Ala) + L-alanine + ATP = L-alanyl-tRNA(Ala) + AMP + diphosphate. Functionally, catalyzes the attachment of alanine to tRNA(Ala) in a two-step reaction: alanine is first activated by ATP to form Ala-AMP and then transferred to the acceptor end of tRNA(Ala). Also edits incorrectly charged Ser-tRNA(Ala) and Gly-tRNA(Ala) via its editing domain. This is Alanine--tRNA ligase 1 from Lachnoclostridium phytofermentans (strain ATCC 700394 / DSM 18823 / ISDg) (Clostridium phytofermentans).